The sequence spans 104 residues: Large ribosomal subunit protein uL24 (104 aa).

It belongs to the universal ribosomal protein uL24 family. As to quaternary structure, part of the 50S ribosomal subunit.

Functionally, one of two assembly initiator proteins, it binds directly to the 5'-end of the 23S rRNA, where it nucleates assembly of the 50S subunit. In terms of biological role, one of the proteins that surrounds the polypeptide exit tunnel on the outside of the subunit. The protein is Large ribosomal subunit protein uL24 of Bartonella tribocorum (strain CIP 105476 / IBS 506).